Here is a 359-residue protein sequence, read N- to C-terminus: Bergaptol O-methyltransferase (359 aa).

Position 126 (His-126) interacts with bergaptol. S-adenosyl-L-homocysteine is bound by residues Ser-179, Gly-203, Asp-226, Asp-246, and Lys-260. A bergaptol-binding site is contributed by His-264. His-264 functions as the Proton acceptor in the catalytic mechanism.

This sequence belongs to the class I-like SAM-binding methyltransferase superfamily. Cation-independent O-methyltransferase family. COMT subfamily. Homodimer. In terms of tissue distribution, mostly expressed in roots and, to a lower extent, in stems and leaves.

The protein resides in the cytoplasm. The enzyme catalyses bergaptol + S-adenosyl-L-methionine = bergapten + S-adenosyl-L-homocysteine. The protein operates within aromatic compound metabolism. Its pathway is secondary metabolite biosynthesis. Functionally, O-methyltransferase involved in the biosynthesis of furocoumarins natural products such as bergapten, a photosensitizer used for medical purpose such as treating psoriasis and vitiligo or facilitating resistance to microbial infection and other stresses. Catalyzes specifically the methylation of bergaptol. Not active on xanthotol, isoscopoletin, scopoletin and esculetin. In Kitagawia praeruptora (Peucedanum praeruptorum), this protein is Bergaptol O-methyltransferase.